Here is a 474-residue protein sequence, read N- to C-terminus: Serine--tRNA ligase (474 aa).

Thr278 to Glu280 is an L-serine binding site. Arg309–Glu311 lines the ATP pocket. Glu332 is an L-serine binding site. Glu396 to Ser399 lines the ATP pocket. Ser432 is an L-serine binding site.

This sequence belongs to the class-II aminoacyl-tRNA synthetase family. Type-1 seryl-tRNA synthetase subfamily. Homodimer. The tRNA molecule binds across the dimer.

Its subcellular location is the cytoplasm. It carries out the reaction tRNA(Ser) + L-serine + ATP = L-seryl-tRNA(Ser) + AMP + diphosphate + H(+). The enzyme catalyses tRNA(Sec) + L-serine + ATP = L-seryl-tRNA(Sec) + AMP + diphosphate + H(+). The protein operates within aminoacyl-tRNA biosynthesis; selenocysteinyl-tRNA(Sec) biosynthesis; L-seryl-tRNA(Sec) from L-serine and tRNA(Sec): step 1/1. Functionally, catalyzes the attachment of serine to tRNA(Ser). Is also able to aminoacylate tRNA(Sec) with serine, to form the misacylated tRNA L-seryl-tRNA(Sec), which will be further converted into selenocysteinyl-tRNA(Sec). This Caulobacter sp. (strain K31) protein is Serine--tRNA ligase.